Here is a 104-residue protein sequence, read N- to C-terminus: Circadian clock oscillator protein KaiB (104 aa).

It belongs to the KaiB family. As to quaternary structure, the KaiABC complex composition changes during the circadian cycle to control KaiC phosphorylation. Complexes KaiC(6), KaiA(2-4):KaiC(6), KaiB(6):KaiC(6) and KaiC(6):KaiB(6):KaiA(12) are among the most important forms, many form cooperatively. Undergoes a major conformational rearrangment; in the free state forms homotetramers as a dimer of dimers. When bound to the CI domain of KaiC switches to a monomeric thioredoxin-fold (KaiB(fs)). KaiB(fs) binds CikA, leading it to dephosphorylate phospho-RpaA.

In terms of biological role, key component of the KaiABC oscillator complex, which constitutes the main circadian regulator in cyanobacteria. Complex composition changes during the circadian cycle to control KaiC phosphorylation. KaiA stimulates KaiC autophosphorylation, while KaiB sequesters KaiA, leading to KaiC autodephosphorylation. Phospho-Ser-431 KaiC accumulation triggers binding of KaiB to form the KaiB(6):KaiC(6) complex, leading to changes in output regulators CikA and SasA. KaiB switches to a thioredoxin-like fold (KaiB(fs)) when bound to KaiC. KaiB(6):KaiC(6) formation exposes a site for KaiA binding that sequesters KaiA from KaiC, making the KaiC(6):KaiB(6):KaiA(12) complex that results in KaiC autodephosphorylation. Its function is as follows. A metamorphic protein which reversibly switches between an inactive tetrameric fold and a rare, thioredoxin-like monomeric fold (KaiB(fs)). KaiB(fs) binds phospho-KaiC, KaiA and CikA. KaiA and CikA compete for binding to KaiB(fs), and KaiB(fs) and SasA compete for binding to KaiC, thus the clock oscillator and output signal pathway are tightly coupled. The protein is Circadian clock oscillator protein KaiB of Parasynechococcus marenigrum (strain WH8102).